The primary structure comprises 772 residues: RNA exonuclease 5 (772 aa).

Over residues 1-10 the composition is skewed to basic and acidic residues; the sequence is MEPEREGTER. The disordered stretch occupies residues 1–26; the sequence is MEPEREGTERHPRKVRKRRQAPNKLV. Residues 11-21 show a composition bias toward basic residues; the sequence is HPRKVRKRRQA. Positions 228 to 376 constitute an Exonuclease domain; sequence LFGLDCEMCL…EDARIILELA (149 aa). 2 RRM domains span residues 505–579 and 600–679; these read STVY…RPVT and GSIY…RHLH.

The chain is RNA exonuclease 5 (REXO5) from Macaca fascicularis (Crab-eating macaque).